A 543-amino-acid polypeptide reads, in one-letter code: Steroid receptor seven-up, isoforms B/C (543 aa).

The segment at 38–191 is disordered; the sequence is PPHSAWHEPP…HSQSSNSGSQ (154 aa). Residues 56 to 68 are compositionally biased toward low complexity; that stretch reads AASAGPGTTTGSV. Residues 83–101 show a composition bias toward polar residues; the sequence is QQSAVIKQDLSCPSLNQAG. Over residues 122 to 141 the composition is skewed to gly residues; the sequence is GSAGGHHSGSGSGSGSGVNP. Polar residues predominate over residues 158–170; that stretch reads MLTSIKGQPTGCG. The span at 171-191 shows a compositional bias: low complexity; that stretch reads STTPSSQANSSHSQSSNSGSQ. A DNA-binding region (nuclear receptor) is located at residues 197–272; that stretch reads NIECVVCGDK…MGMRREAVQR (76 aa). 2 consecutive NR C4-type zinc fingers follow at residues 200-220 and 236-260; these read CVVCGDKSSGKHYGQFTCEGC and CRGSRNCPIDQHHRNQCQYCRLKKC. One can recognise an NR LBD domain in the interval 307–532; that stretch reads YLSSYISLLL…TLIRDMLLSG (226 aa).

The protein belongs to the nuclear hormone receptor family. NR2 subfamily. In terms of tissue distribution, expressed in several embryonic tissues; dorsal vessel, oenocyte and fat body. CNS expression is dynamic and confined to temporally restricted subsections of the NB lineage; expressed in many NB and GMCs, but only a small number of neurons.

The protein localises to the nucleus. Receptor that is required in photoreceptors R1, R3, R4 and R6 during eye development; generation of the ganglion mother cell-2 (GMC-2) fate in the nb7-3 lineage, coinciding with the transition in the expression of HB to KR in the neuroblasts (NBs). This chain is Steroid receptor seven-up, isoforms B/C (svp), found in Drosophila melanogaster (Fruit fly).